The primary structure comprises 488 residues: B-type flagellin (488 aa).

It belongs to the bacterial flagellin family. Phosphorylated on tyrosine residue(s).

It localises to the secreted. The protein localises to the bacterial flagellum. Its function is as follows. Flagellin is the subunit protein which polymerizes to form the filaments of bacterial flagella. In Pseudomonas aeruginosa (strain ATCC 15692 / DSM 22644 / CIP 104116 / JCM 14847 / LMG 12228 / 1C / PRS 101 / PAO1), this protein is B-type flagellin (fliC).